A 125-amino-acid chain; its full sequence is Large ribosomal subunit protein bL12 (125 aa).

Belongs to the bacterial ribosomal protein bL12 family. As to quaternary structure, homodimer. Part of the ribosomal stalk of the 50S ribosomal subunit. Forms a multimeric L10(L12)X complex, where L10 forms an elongated spine to which 2 to 4 L12 dimers bind in a sequential fashion. Binds GTP-bound translation factors.

Its function is as follows. Forms part of the ribosomal stalk which helps the ribosome interact with GTP-bound translation factors. Is thus essential for accurate translation. In Cereibacter sphaeroides (Rhodobacter sphaeroides), this protein is Large ribosomal subunit protein bL12.